The sequence spans 125 residues: MLTSKIYKLLTERDVLDFKLKIFIRRNVFITHLFFLLHSLLLFLSQFCRREFAFFLPTINLVTHSIKFITLFFFFLNSWASTLSCNPIMARGCHFPILNRPNFVSQILSKFCRMRNNNDTTFKSF.

2 helical membrane-spanning segments follow: residues 28-48 (VFITHLFFLLHSLLLFLSQFC) and 54-74 (FFLPTINLVTHSIKFITLFFF).

It localises to the membrane. This is an uncharacterized protein from Saccharomyces cerevisiae (strain ATCC 204508 / S288c) (Baker's yeast).